The following is a 78-amino-acid chain: MEGEQLQTAPYNPRFPQQNQTKHCWANYVDYYGCVKHYNGDNSKCQTFFNSMNSLCPAAWISEWDEQKAADLFPSDRV.

Residues 21 to 64 form the CHCH domain; the sequence is TKHCWANYVDYYGCVKHYNGDNSKCQTFFNSMNSLCPAAWISEW. Positions 24–34 match the Cx9C motif motif; the sequence is CWANYVDYYGC. 2 disulfide bridges follow: Cys-24–Cys-56 and Cys-34–Cys-45. The Cx10C motif signature appears at 45-56; sequence CQTFFNSMNSLC.

Belongs to the cytochrome c oxidase subunit 6B family. In terms of assembly, component of the cytochrome c oxidase (complex IV, CIV), a multisubunit enzyme composed of a catalytic core of 3 subunits and several supernumerary subunits. The complex exists as a monomer or a dimer and forms supercomplexes (SCs) in the inner mitochondrial membrane with ubiquinol-cytochrome c oxidoreductase (cytochrome b-c1 complex, complex III, CIII).

Its subcellular location is the mitochondrion inner membrane. Its pathway is energy metabolism; oxidative phosphorylation. In terms of biological role, component of the cytochrome c oxidase, the last enzyme in the mitochondrial electron transport chain which drives oxidative phosphorylation. The respiratory chain contains 3 multisubunit complexes succinate dehydrogenase (complex II, CII), ubiquinol-cytochrome c oxidoreductase (cytochrome b-c1 complex, complex III, CIII) and cytochrome c oxidase (complex IV, CIV), that cooperate to transfer electrons derived from NADH and succinate to molecular oxygen, creating an electrochemical gradient over the inner membrane that drives transmembrane transport and the ATP synthase. Cytochrome c oxidase is the component of the respiratory chain that catalyzes the reduction of oxygen to water. Electrons originating from reduced cytochrome c in the intermembrane space (IMS) are transferred via the dinuclear copper A center (CU(A)) of subunit 2 and heme A of subunit 1 to the active site in subunit 1, a binuclear center (BNC) formed by heme A3 and copper B (CU(B)). The BNC reduces molecular oxygen to 2 water molecules using 4 electrons from cytochrome c in the IMS and 4 protons from the mitochondrial matrix. The polypeptide is Probable cytochrome c oxidase subunit 6B (Dictyostelium discoideum (Social amoeba)).